We begin with the raw amino-acid sequence, 223 residues long: Ubiquitin carboxyl-terminal hydrolase isozyme L1 (223 aa).

Met-1 is modified (N-acetylmethionine). Residues 2-221 (QLKPMEINPE…VRFSAVALCK (220 aa)) form the UCH catalytic domain. The segment at 5-10 (PMEINP) is interaction with ubiquitin. Cys-90 serves as the catalytic Nucleophile. Residue Ser-125 is modified to Phosphoserine. The Proton donor role is filled by His-161. The interaction with ubiquitin stretch occupies residues 211-216 (EVRFSA). Cys-220 carries S-farnesyl cysteine lipidation. The propeptide at 221 to 223 (KAA) is removed in mature form.

Belongs to the peptidase C12 family. In terms of assembly, monomer. Homodimer. Interacts with SNCA. Interacts with COPS5. O-glycosylated. In terms of tissue distribution, found in neuronal cell bodies and processes throughout the neocortex (at protein level). Expressed in neurons and cells of the diffuse neuroendocrine system and their tumors. Weakly expressed in ovary. Down-regulated in brains from Parkinson disease and Alzheimer disease patients.

It is found in the cytoplasm. The protein resides in the endoplasmic reticulum membrane. The enzyme catalyses Thiol-dependent hydrolysis of ester, thioester, amide, peptide and isopeptide bonds formed by the C-terminal Gly of ubiquitin (a 76-residue protein attached to proteins as an intracellular targeting signal).. In terms of biological role, deubiquitinase that plays a role in the regulation of several processes such as maintenance of synaptic function, cardiac function, inflammatory response or osteoclastogenesis. Abrogates the ubiquitination of multiple proteins including WWTR1/TAZ, EGFR, HIF1A and beta-site amyloid precursor protein cleaving enzyme 1/BACE1. In addition, recognizes and hydrolyzes a peptide bond at the C-terminal glycine of ubiquitin to maintain a stable pool of monoubiquitin that is a key requirement for the ubiquitin-proteasome and the autophagy-lysosome pathways. Regulates amyloid precursor protein/APP processing by promoting BACE1 degradation resulting in decreased amyloid beta production. Plays a role in the immune response by regulating the ability of MHC I molecules to reach cross-presentation compartments competent for generating Ag-MHC I complexes. Mediates the 'Lys-48'-linked deubiquitination of the transcriptional coactivator WWTR1/TAZ leading to its stabilization and inhibition of osteoclastogenesis. Deubiquitinates and stabilizes epidermal growth factor receptor EGFR to prevent its degradation and to activate its downstream mediators. Modulates oxidative activity in skeletal muscle by regulating key mitochondrial oxidative proteins. Enhances the activity of hypoxia-inducible factor 1-alpha/HIF1A by abrogateing its VHL E3 ligase-mediated ubiquitination and consequently inhibiting its degradation. The protein is Ubiquitin carboxyl-terminal hydrolase isozyme L1 (UCHL1) of Homo sapiens (Human).